The following is a 1436-amino-acid chain: Antigen WC1.1 (1436 aa).

Residues 1–25 (MALGRHLSLRGLCVLLLGTMVGGQA) form the signal peptide. SRCR domains follow at residues 28 to 131 (LRLK…VVCS), 134 to 234 (VRLA…VVCS), and 239 to 340 (VRLM…VICS). 2 disulfide bridges follow: cysteine 66–cysteine 130 and cysteine 97–cysteine 107. Residue asparagine 162 is glycosylated (N-linked (GlcNAc...) asparagine). 2 disulfides stabilise this stretch: cysteine 172–cysteine 233 and cysteine 203–cysteine 213. N-linked (GlcNAc...) asparagine glycosylation is found at asparagine 244 and asparagine 256. Cystine bridges form between cysteine 265/cysteine 329, cysteine 278/cysteine 339, and cysteine 309/cysteine 319. N-linked (GlcNAc...) asparagine glycosylation is found at asparagine 351, asparagine 424, and asparagine 444. 5 consecutive SRCR domains span residues 376 to 476 (LRLV…VICS), 481 to 581 (LRMV…IWCA), 586 to 686 (IRLV…VICS), 689 to 789 (VRLA…VVCS), and 794 to 895 (VQLM…VICS). 3 cysteine pairs are disulfide-bonded: cysteine 401/cysteine 465, cysteine 414/cysteine 475, and cysteine 445/cysteine 455. N-linked (GlcNAc...) asparagine glycans are attached at residues asparagine 499 and asparagine 531. 6 disulfide bridges follow: cysteine 506/cysteine 570, cysteine 519/cysteine 580, cysteine 550/cysteine 560, cysteine 611/cysteine 675, cysteine 624/cysteine 685, and cysteine 655/cysteine 665. N-linked (GlcNAc...) asparagine glycosylation is present at asparagine 717. Cystine bridges form between cysteine 727-cysteine 788 and cysteine 758-cysteine 768. N-linked (GlcNAc...) asparagine glycosylation occurs at asparagine 799. 3 disulfide bridges follow: cysteine 820–cysteine 884, cysteine 833–cysteine 894, and cysteine 864–cysteine 874. 3 N-linked (GlcNAc...) asparagine glycosylation sites follow: asparagine 897, asparagine 979, and asparagine 999. SRCR domains follow at residues 931-1031 (LRLV…VICS), 1036-1136 (LRMV…ISCE), and 1155-1255 (LRLR…VRCS). Disulfide bonds link cysteine 956–cysteine 1020, cysteine 969–cysteine 1030, and cysteine 1000–cysteine 1010. N-linked (GlcNAc...) asparagine glycans are attached at residues asparagine 1054 and asparagine 1086. 3 disulfides stabilise this stretch: cysteine 1061/cysteine 1125, cysteine 1074/cysteine 1135, and cysteine 1105/cysteine 1115. N-linked (GlcNAc...) asparagine glycans are attached at residues asparagine 1173 and asparagine 1214. 3 cysteine pairs are disulfide-bonded: cysteine 1180–cysteine 1244, cysteine 1193–cysteine 1254, and cysteine 1224–cysteine 1234. The interval 1337–1410 (EGLGSPDQMT…PGEGEESFWL (74 aa)) is disordered. The span at 1348–1358 (VPDENYDDAEE) shows a compositional bias: acidic residues. Polar residues predominate over residues 1384–1393 (RSSQTGSFLN). Asparagine 1393 carries an N-linked (GlcNAc...) asparagine glycan.

As to expression, expressed on subsets of CD4-CD8- gamma delta T lymphocytes.

It is found in the secreted. In Bos taurus (Bovine), this protein is Antigen WC1.1.